Here is a 145-residue protein sequence, read N- to C-terminus: Ribonuclease P protein component (145 aa).

The tract at residues 119-145 (PLPAAPGTMPPARTVRPSSPSPTEPEL) is disordered.

The protein belongs to the RnpA family. In terms of assembly, consists of a catalytic RNA component (M1 or rnpB) and a protein subunit.

The enzyme catalyses Endonucleolytic cleavage of RNA, removing 5'-extranucleotides from tRNA precursor.. Functionally, RNaseP catalyzes the removal of the 5'-leader sequence from pre-tRNA to produce the mature 5'-terminus. It can also cleave other RNA substrates such as 4.5S RNA. The protein component plays an auxiliary but essential role in vivo by binding to the 5'-leader sequence and broadening the substrate specificity of the ribozyme. The chain is Ribonuclease P protein component from Xanthomonas euvesicatoria pv. vesicatoria (strain 85-10) (Xanthomonas campestris pv. vesicatoria).